A 421-amino-acid polypeptide reads, in one-letter code: Methionine aminopeptidase 2 (421 aa).

A disordered region spans residues 1 to 53; it reads MTDAEIENSPASDLKELNLENEGVEQQDQAKADESDPVESKKKKNKKKKKKKS. The span at 28-40 shows a compositional bias: basic and acidic residues; that stretch reads DQAKADESDPVES. Serine 35 carries the post-translational modification Phosphoserine. Over residues 41–53 the composition is skewed to basic residues; the sequence is KKKKNKKKKKKKS. Histidine 174 is a binding site for substrate. Residues aspartate 194, aspartate 205, and histidine 274 each contribute to the a divalent metal cation site. Histidine 282 is a binding site for substrate. A divalent metal cation is bound by residues glutamate 307 and glutamate 402.

Belongs to the peptidase M24A family. Methionine aminopeptidase eukaryotic type 2 subfamily. Co(2+) serves as cofactor. It depends on Zn(2+) as a cofactor. The cofactor is Mn(2+). Requires Fe(2+) as cofactor.

The protein localises to the cytoplasm. The catalysed reaction is Release of N-terminal amino acids, preferentially methionine, from peptides and arylamides.. Functionally, cotranslationally removes the N-terminal methionine from nascent proteins. The N-terminal methionine is often cleaved when the second residue in the primary sequence is small and uncharged (Met-Ala-, Cys, Gly, Pro, Ser, Thr, or Val). This Saccharomyces cerevisiae (strain RM11-1a) (Baker's yeast) protein is Methionine aminopeptidase 2.